A 75-amino-acid chain; its full sequence is UPF0270 protein Pfl01_4103 (75 aa).

Belongs to the UPF0270 family.

The sequence is that of UPF0270 protein Pfl01_4103 from Pseudomonas fluorescens (strain Pf0-1).